Here is a 359-residue protein sequence, read N- to C-terminus: Probably inactive receptor-like protein kinase At5g41680 (359 aa).

Positions 59–357 (AASAEILGKG…KLIQDIPTNF (299 aa)) constitute a Protein kinase domain. ATP contacts are provided by residues 65 to 73 (LGKGAHVTT) and Lys-87.

This sequence belongs to the protein kinase superfamily. Ser/Thr protein kinase family.

The sequence is that of Probably inactive receptor-like protein kinase At5g41680 from Arabidopsis thaliana (Mouse-ear cress).